A 214-amino-acid chain; its full sequence is MSFNSPFFDFFDNINNEVDAFNRLLGEGGLRGYAPRRQLANTPAKDSTGKEVARPNNYAGALYDPRDETLDDWFDNDLSLFPSGFGFPRSVAVPVDILDHDNNYELKVVVPGVKSKKDIDIEYHQNKNQILVSGEIPSTLNEESKDKVKVKESSSGKFKRVITLPDYPGVDADNIKADYANGVLTLTVPKLKPQKDGKNHVKKIEVSSQESWGN.

Serine 2 is subject to N-acetylserine. Threonine 42 bears the Phosphothreonine mark. A sHSP domain is found at 86-207 (GFPRSVAVPV…KNHVKKIEVS (122 aa)). Position 90 is a phosphoserine (serine 90). Phosphothreonine is present on threonine 163. Positions 192 to 214 (KPQKDGKNHVKKIEVSSQESWGN) are disordered. Positions 193-205 (PQKDGKNHVKKIE) are enriched in basic and acidic residues. Phosphoserine is present on residues serine 208 and serine 211.

Belongs to the small heat shock protein (HSP20) family. Present in large complexes.

In terms of biological role, not known. One of the major polypeptides produced on heat shock. The chain is Heat shock protein 26 (HSP26) from Saccharomyces cerevisiae (strain ATCC 204508 / S288c) (Baker's yeast).